A 591-amino-acid chain; its full sequence is V-type ATP synthase alpha chain (591 aa).

233–240 (GPFGAGKT) contacts ATP.

This sequence belongs to the ATPase alpha/beta chains family.

The catalysed reaction is ATP + H2O + 4 H(+)(in) = ADP + phosphate + 5 H(+)(out). Produces ATP from ADP in the presence of a proton gradient across the membrane. The V-type alpha chain is a catalytic subunit. The chain is V-type ATP synthase alpha chain from Streptococcus pyogenes serotype M28 (strain MGAS6180).